Here is a 329-residue protein sequence, read N- to C-terminus: Tetraacyldisaccharide 4'-kinase (329 aa).

An ATP-binding site is contributed by 58–65 (SVGGTGKT).

It belongs to the LpxK family.

It catalyses the reaction a lipid A disaccharide + ATP = a lipid IVA + ADP + H(+). It participates in glycolipid biosynthesis; lipid IV(A) biosynthesis; lipid IV(A) from (3R)-3-hydroxytetradecanoyl-[acyl-carrier-protein] and UDP-N-acetyl-alpha-D-glucosamine: step 6/6. Functionally, transfers the gamma-phosphate of ATP to the 4'-position of a tetraacyldisaccharide 1-phosphate intermediate (termed DS-1-P) to form tetraacyldisaccharide 1,4'-bis-phosphate (lipid IVA). The polypeptide is Tetraacyldisaccharide 4'-kinase (Idiomarina loihiensis (strain ATCC BAA-735 / DSM 15497 / L2-TR)).